The primary structure comprises 126 residues: Small ribosomal subunit protein uS13 (126 aa).

Positions 92 to 126 (HRRGLPVRGQRTKTNARTRKGPKKTVAGKKKATRK) are disordered.

It belongs to the universal ribosomal protein uS13 family. As to quaternary structure, part of the 30S ribosomal subunit. Forms a loose heterodimer with protein S19. Forms two bridges to the 50S subunit in the 70S ribosome.

In terms of biological role, located at the top of the head of the 30S subunit, it contacts several helices of the 16S rRNA. In the 70S ribosome it contacts the 23S rRNA (bridge B1a) and protein L5 of the 50S subunit (bridge B1b), connecting the 2 subunits; these bridges are implicated in subunit movement. Contacts the tRNAs in the A and P-sites. The polypeptide is Small ribosomal subunit protein uS13 (Deinococcus deserti (strain DSM 17065 / CIP 109153 / LMG 22923 / VCD115)).